The following is a 955-amino-acid chain: MSSPAQPPPTRPPVAAPPPSLAAAAPISVQPPPLQPKPPPHPQQPPQAVVSVGVGPPPPTPQHQQQQQGPPGHAPPQQRPRICFNAHCKDPKSDGPRRRGWRLRNGDFAELCDRCYHSFEHGGFCETFHLEVAGWRNCESCGKRLHCGCIVSVHAFVHLDAGGVECVMCARKSHAAMAPSQIWSSSMHMAQNVADRKDNFVKSWRPPAGQFSSQWRQNNMWSMSTMQSDLQQRLAFEFDRPSGSEKLLPGRTFIHAHEKKFDDMHDRSTTPAGMNQIMRERYANGHTQHTTLDPTYAYTLYHREGTNPNLHDHSHHAGENDHLTARKGVTSDPCSSVSTTFKLDSHHPSILKDDPSAVPAGLSSNFSSANGPKDHIRIGPTQQQQQMASSSLQKQFYSHSVIDNDFQAQLRNGRPRMDAKARSQLLPRYWPRITDQELQHLSGDSNSVITPLFEKMLSASDAGRIGRLVLPKKCAEAYFPAISQAEGLPLKVQDATGKEWVFQFRFWPNNNSRMYVLEGVTPCIQSMQLQAGDTVTFSRIDPEGKLVMGFRKATNLSAEQDQPTKPANGVLPPPEANNKVVVPDSSPNAAVPRPIKVNTESKSSSPVEQATACKIDKGALPQKEGPGTSSSSPLPVKRKATSVGPKIKRFHMDSEESMELKITWEEAQELLRPPPKAPSIVVVDGHEFEEYEEPPILGRRTYFVTDQSGENHQWAQCEDCSKWRKLPVDALLPSKWTCSDNKWDSERSSCDSAQEINMEELGEMIPIKPGAAKKTKGKVDTDNIDVSDGLDTLANLAILGEGESLPSQPTTRHPRHRPGCSCIVCIQPPSGKGPKHKQTCTCNVCMTVRRRFRTLMMRREKRQQSEKDSGVPRKREPGQSSEPVPQSGSGAHPTSTSSPHQRADTNGEGPEDMSIDNKRTSSPVKNQIDLNSQPEREDEQSPKSDATRLLRDNPT.

2 stretches are compositionally biased toward pro residues: residues 1 to 20 (MSSP…PPPS) and 29 to 45 (VQPP…PQQP). Disordered regions lie at residues 1–81 (MSSP…QRPR) and 325–392 (ARKG…SSSL). Residues 62-71 (QHQQQQQGPP) show a composition bias toward low complexity. Over residues 332–342 (DPCSSVSTTFK) the composition is skewed to polar residues. Over residues 343-355 (LDSHHPSILKDDP) the composition is skewed to basic and acidic residues. A compositionally biased stretch (low complexity) spans 382-392 (QQQQQMASSSL). Residues 453–554 (FEKMLSASDA…KLVMGFRKAT (102 aa)) constitute a DNA-binding region (TF-B3). 2 stretches are compositionally biased toward polar residues: residues 556–565 (LSAEQDQPTK) and 598–608 (NTESKSSSPVE). A disordered region spans residues 556 to 642 (LSAEQDQPTK…PLPVKRKATS (87 aa)). The CW-type zinc-finger motif lies at 708–758 (SGENHQWAQCEDCSKWRKLPVDALLPSKWTCSDNKWDSERSSCDSAQEINM). Positions 717, 720, 738, and 750 each coordinate Zn(2+). The segment at 856 to 955 (MMRREKRQQS…ATRLLRDNPT (100 aa)) is disordered. The span at 862 to 877 (RQQSEKDSGVPRKREP) shows a compositional bias: basic and acidic residues. Polar residues-rich tracts occupy residues 878–900 (GQSS…SSPH) and 920–933 (TSSP…LNSQ). Residues 939-955 (EQSPKSDATRLLRDNPT) show a composition bias toward basic and acidic residues.

Its subcellular location is the nucleus. This Oryza sativa subsp. japonica (Rice) protein is B3 domain-containing protein Os07g0563300.